Consider the following 240-residue polypeptide: Flagellar L-ring protein (240 aa).

The first 20 residues, 1–20 (MIRNFLLFFMPIYAILFLSG), serve as a signal peptide directing secretion. C21 is lipidated: N-palmitoyl cysteine. C21 is lipidated: S-diacylglycerol cysteine.

The protein belongs to the FlgH family. The basal body constitutes a major portion of the flagellar organelle and consists of four rings (L,P,S, and M) mounted on a central rod.

It is found in the cell outer membrane. The protein localises to the bacterial flagellum basal body. Its function is as follows. Assembles around the rod to form the L-ring and probably protects the motor/basal body from shearing forces during rotation. The sequence is that of Flagellar L-ring protein from Sulfurimonas denitrificans (strain ATCC 33889 / DSM 1251) (Thiomicrospira denitrificans (strain ATCC 33889 / DSM 1251)).